We begin with the raw amino-acid sequence, 140 residues long: Large ribosomal subunit protein uL13 (140 aa).

Part of the 50S ribosomal subunit.

Its function is as follows. This protein is one of the early assembly proteins of the 50S ribosomal subunit, although it is not seen to bind rRNA by itself. It is important during the early stages of 50S assembly. In Thermus thermophilus (strain ATCC 27634 / DSM 579 / HB8), this protein is Large ribosomal subunit protein uL13.